The following is a 1368-amino-acid chain: DNA-directed RNA polymerase subunit beta (1368 aa).

Belongs to the RNA polymerase beta chain family. As to quaternary structure, the RNAP catalytic core consists of 2 alpha, 1 beta, 1 beta' and 1 omega subunit. When a sigma factor is associated with the core the holoenzyme is formed, which can initiate transcription.

The enzyme catalyses RNA(n) + a ribonucleoside 5'-triphosphate = RNA(n+1) + diphosphate. In terms of biological role, DNA-dependent RNA polymerase catalyzes the transcription of DNA into RNA using the four ribonucleoside triphosphates as substrates. The protein is DNA-directed RNA polymerase subunit beta of Cupriavidus pinatubonensis (strain JMP 134 / LMG 1197) (Cupriavidus necator (strain JMP 134)).